The following is a 192-amino-acid chain: Adenylate kinase (192 aa).

10–18 lines the ATP pocket; sequence GVPGVGGTT.

It belongs to the archaeal adenylate kinase family. In terms of assembly, monomer.

It is found in the cytoplasm. The catalysed reaction is AMP + ATP = 2 ADP. The chain is Adenylate kinase (adkA) from Methanotorris igneus (Methanococcus igneus).